The following is a 317-amino-acid chain: tRNA pseudouridine synthase B (317 aa).

The active-site Nucleophile is the aspartate 47.

It belongs to the pseudouridine synthase TruB family. Type 1 subfamily.

The catalysed reaction is uridine(55) in tRNA = pseudouridine(55) in tRNA. In terms of biological role, responsible for synthesis of pseudouridine from uracil-55 in the psi GC loop of transfer RNAs. The polypeptide is tRNA pseudouridine synthase B (Shewanella sp. (strain MR-7)).